Here is a 183-residue protein sequence, read N- to C-terminus: ATP synthase subunit b, chloroplastic (183 aa).

The helical transmembrane segment at 28-48 threads the bilayer; it reads DIFEANVINILLLLFGLIYVL.

This sequence belongs to the ATPase B chain family. F-type ATPases have 2 components, F(1) - the catalytic core - and F(0) - the membrane proton channel. F(1) has five subunits: alpha(3), beta(3), gamma(1), delta(1), epsilon(1). F(0) has four main subunits: a(1), b(1), b'(1) and c(10-14). The alpha and beta chains form an alternating ring which encloses part of the gamma chain. F(1) is attached to F(0) by a central stalk formed by the gamma and epsilon chains, while a peripheral stalk is formed by the delta, b and b' chains.

It is found in the plastid. The protein localises to the chloroplast thylakoid membrane. Functionally, f(1)F(0) ATP synthase produces ATP from ADP in the presence of a proton or sodium gradient. F-type ATPases consist of two structural domains, F(1) containing the extramembraneous catalytic core and F(0) containing the membrane proton channel, linked together by a central stalk and a peripheral stalk. During catalysis, ATP synthesis in the catalytic domain of F(1) is coupled via a rotary mechanism of the central stalk subunits to proton translocation. In terms of biological role, component of the F(0) channel, it forms part of the peripheral stalk, linking F(1) to F(0). The sequence is that of ATP synthase subunit b, chloroplastic from Porphyra purpurea (Red seaweed).